The following is an 800-amino-acid chain: Mitogen-activated protein kinase kinase kinase 20 (800 aa).

S2 carries the post-translational modification N-acetylserine. Phosphoserine; by autocatalysis is present on residues S2, S3, and S7. A Protein kinase domain is found at 16–277; that stretch reads LQFFENCGGG…SLPDKCNSFL (262 aa). ATP-binding positions include 22–30 and K45; that span reads CGGGSFGSV. Residue D133 is the Proton acceptor of the active site. Residue T161 is modified to Phosphothreonine; by autocatalysis. At S165 the chain carries Phosphoserine; by autocatalysis. S275 carries the post-translational modification Phosphoserine. The interval 287 to 308 is leucine-zipper; it reads IEATLERLKKLERDLSFKEQEL. S302 carries the phosphoserine; by autocatalysis modification. 5 positions are modified to phosphoserine: W339, E429, K434, D454, and S567. Residues 339 to 410 form the SAM domain; the sequence is WTEDDVYCWV…KSAIEKLTHD (72 aa). A Phosphothreonine; by autocatalysis modification is found at T586. Phosphoserine; by autocatalysis is present on S587. Phosphoserine is present on residues S593 and S599. The residue at position 628 (T628) is a Phosphothreonine. Residues S633, S637, and S648 each carry the phosphoserine modification. A phosphoserine; by autocatalysis mark is found at S649 and S660. The span at 652–666 shows a compositional bias: polar residues; that stretch reads LNSRDSGFSSGNTDT. A disordered region spans residues 652–800; that stretch reads LNSRDSGFSS…RGDHRGWRNF (149 aa). Position 664 is a phosphothreonine; by autocatalysis (T664). Positions 667–678 are enriched in basic and acidic residues; it reads SSERGRYSDRSR. Residues 670-713 are sensing domain (S); sequence RGRYSDRSRNKYGRGSISLNSSPRGRYSGKSQHSTPSRGRYPGK. S685 is subject to Phosphoserine. 2 stretches are compositionally biased toward polar residues: residues 686–706 and 717–726; these read ISLNSSPRGRYSGKSQHSTPS and VSQSALNPHQ. Phosphoserine; by autocatalysis is present on residues S718 and S720. A phosphoserine mark is found at S727 and S733. Residues 728–738 show a composition bias toward basic and acidic residues; it reads PDFKRSPRDLH. Position 742 is a phosphothreonine; by autocatalysis (T742). Composition is skewed to basic and acidic residues over residues 750–763 and 785–800; these read PETDSRASEEDSKV and TNKERARGDHRGWRNF. A C-terminal domain (CTD) region spans residues 774–800; sequence RKKPHRPSPAKTNKERARGDHRGWRNF.

This sequence belongs to the protein kinase superfamily. STE Ser/Thr protein kinase family. MAP kinase kinase kinase subfamily. As to quaternary structure, homodimer. Interacts with ZNF33A. Component of a signaling complex containing at least AKAP13, PKN1, MAPK14, MAP3K20 and MAP2K3. Within this complex, AKAP13 interacts directly with PKN1, which in turn recruits MAPK14, MAP2K3 and MAP3K20. Interacts with EIF2AK4/GCN2; promoting EIF2AK4/GCN2 kinase activity. Interacts with isoform ZAKbeta. In terms of assembly, interacts with isoform ZAKalpha. Requires Mg(2+) as cofactor. In terms of processing, activated by phosphorylation by PKN1, followed by autophosphorylation on Thr-161 and Ser-165. Autophosphorylation in response to ribotoxic stress promotes dissociation from colliding ribosomes and activation. Ubiquitously expressed. Isoform ZAKbeta is the predominant form in all tissues examined, except for liver, in which isoform ZAKalpha is more highly expressed.

The protein localises to the cytoplasm. The protein resides in the nucleus. The enzyme catalyses L-seryl-[protein] + ATP = O-phospho-L-seryl-[protein] + ADP + H(+). It carries out the reaction L-threonyl-[protein] + ATP = O-phospho-L-threonyl-[protein] + ADP + H(+). With respect to regulation, activated in response to stress, such as ribosomal stress, osmotic shock and ionizing radiation. Activated by phosphorylation by PKN1, followed by autophosphorylation on Thr-161 and Ser-165. Inhibited by nilotinib, sorafenib, dabrafenib, rebastinib and vemurafenib. Selectively inhibited by N-(3)-((1H-Pyrazolo[3,4-b]pyridin-5-yl)ethynyl)benzenesulfonamide compound 3h. Selectively inhibited by 1,2,3-triazole benzenesulfonamides. Functionally, stress-activated component of a protein kinase signal transduction cascade that promotes programmed cell death in response to various stress, such as ribosomal stress, osmotic shock and ionizing radiation. Acts by catalyzing phosphorylation of MAP kinase kinases, leading to activation of the JNK (MAPK8/JNK1, MAPK9/JNK2 and/or MAPK10/JNK3) and MAP kinase p38 (MAPK11, MAPK12, MAPK13 and/or MAPK14) pathways. Activates JNK through phosphorylation of MAP2K4/MKK4 and MAP2K7/MKK7, and MAP kinase p38 gamma (MAPK12) via phosphorylation of MAP2K3/MKK3 and MAP2K6/MKK6. Involved in stress associated with adrenergic stimulation: contributes to cardiac decompensation during periods of acute cardiac stress. May be involved in regulation of S and G2 cell cycle checkpoint by mediating phosphorylation of CHEK2. Its function is as follows. Key component of the stress-activated protein kinase signaling cascade in response to ribotoxic stress or UV-B irradiation. Acts as the proximal sensor of ribosome collisions during the ribotoxic stress response (RSR): directly binds to the ribosome by inserting its flexible C-terminus into the ribosomal intersubunit space, thereby acting as a sentinel for colliding ribosomes. Upon ribosome collisions, activates either the stress-activated protein kinase signal transduction cascade or the integrated stress response (ISR), leading to programmed cell death or cell survival, respectively. Dangerous levels of ribosome collisions trigger the autophosphorylation and activation of MAP3K20, which dissociates from colliding ribosomes and phosphorylates MAP kinase kinases, leading to activation of the JNK and MAP kinase p38 pathways that promote programmed cell death. Less dangerous levels of ribosome collisions trigger the integrated stress response (ISR): MAP3K20 activates EIF2AK4/GCN2 independently of its protein-kinase activity, promoting EIF2AK4/GCN2-mediated phosphorylation of EIF2S1/eIF-2-alpha. Also part of the stress-activated protein kinase signaling cascade triggering the NLRP1 inflammasome in response to UV-B irradiation: ribosome collisions activate MAP3K20, which directly phosphorylates NLRP1, leading to activation of the NLRP1 inflammasome and subsequent pyroptosis. NLRP1 is also phosphorylated by MAP kinase p38 downstream of MAP3K20. Also acts as a histone kinase by phosphorylating histone H3 at 'Ser-28' (H3S28ph). In terms of biological role, isoform that lacks the C-terminal region that mediates ribosome-binding: does not act as a sensor of ribosome collisions in response to ribotoxic stress. May act as an antagonist of isoform ZAKalpha: interacts with isoform ZAKalpha, leading to decrease the expression of isoform ZAKalpha. The sequence is that of Mitogen-activated protein kinase kinase kinase 20 from Homo sapiens (Human).